A 258-amino-acid chain; its full sequence is Alpha- and beta-fibrinogenase stejnefibrase-1 (258 aa).

The N-terminal stretch at 1-18 is a signal peptide; that stretch reads MELIRVLANLLILQLSYA. Positions 19 to 24 are excised as a propeptide; it reads QKSSEL. The Peptidase S1 domain occupies 25–249; sequence IIGGDECNID…HLDWIQNIIA (225 aa). 6 cysteine pairs are disulfide-bonded: cysteine 31-cysteine 163, cysteine 50-cysteine 66, cysteine 98-cysteine 256, cysteine 142-cysteine 210, cysteine 174-cysteine 189, and cysteine 200-cysteine 225. Residue histidine 65 is the Charge relay system of the active site. A glycan (N-linked (GlcNAc...) asparagine) is linked at asparagine 103. Aspartate 110 (charge relay system) is an active-site residue. N-linked (GlcNAc...) asparagine glycans are attached at residues asparagine 121, asparagine 122, asparagine 154, and asparagine 170. Serine 204 (charge relay system) is an active-site residue.

This sequence belongs to the peptidase S1 family. Snake venom subfamily. As to quaternary structure, monomer. As to expression, expressed by the venom gland.

It localises to the secreted. With respect to regulation, its activity is inhibited by PMSF and p-nitrophenyl-p-guanidinobenzoate (NPGB). Its function is as follows. Snake venom serine protease. Degrades concomitantly alpha- (FGA) and beta-chains of fibrinogen (FGB). The polypeptide is Alpha- and beta-fibrinogenase stejnefibrase-1 (Trimeresurus stejnegeri (Chinese green tree viper)).